We begin with the raw amino-acid sequence, 403 residues long: Putative glutamate--cysteine ligase 2 (403 aa).

A disordered region spans residues 370–403 (ESAAQRRAPQAARRRIRASSEPLGPMSMWPERLH).

It belongs to the glutamate--cysteine ligase type 2 family. YbdK subfamily.

The catalysed reaction is L-cysteine + L-glutamate + ATP = gamma-L-glutamyl-L-cysteine + ADP + phosphate + H(+). Its function is as follows. ATP-dependent carboxylate-amine ligase which exhibits weak glutamate--cysteine ligase activity. In Bordetella avium (strain 197N), this protein is Putative glutamate--cysteine ligase 2.